Consider the following 387-residue polypeptide: MKKLLKSVLAFAVLGSASSLHALPVGNPAEPSLMIDGILWEGFGGDPCDPCTTWCDAISLRLGYYGDFVFDRVLKTDVNKQFEMGAAPTGDADLTTAPTPASRENPAYGKHMQDAEMFTNAAYMALNIWDRFDVFCTLGATSGYLKGNSAAFNLVGLFGRDETAVAADDIPNVSLSQAVVELYTDTAFAWSVGARAALWECGCATLGASFQYAQSKPKVEELNVLCNAAEFTINKPKGYVGQEFPLNIKAGTVSATDTKDASIDYHEWQASLALSYRLNMFTPYIGVKWSRASFDADTIRIAQPKLETSILKMTTWNPTISGSGIDVDTKITDTLQIVSLQLNKMKSRKSCGLAIGTTIVDADKYAVTVETRLIDERAAHVNAQFRF.

Residues 1–22 (MKKLLKSVLAFAVLGSASSLHA) form the signal peptide.

It belongs to the chlamydial porin (CP) (TC 1.B.2) family. As to quaternary structure, part of a disulfide cross-linked outer membrane complex (COMC) composed of the major outer membrane porin (MOMP), the small cysteine-rich protein (OmcA) and the large cysteine-rich periplasmic protein (OmcB).

It is found in the cell outer membrane. Functionally, in elementary bodies (EBs, the infectious stage, which is able to survive outside the host cell) provides the structural integrity of the outer envelope through disulfide cross-links with the small cysteine-rich protein and the large cysteine-rich periplasmic protein. It has been described in publications as the Sarkosyl-insoluble COMC (Chlamydia outer membrane complex), and serves as the functional equivalent of peptidoglycan. Its function is as follows. Permits diffusion of specific solutes through the outer membrane. This is Major outer membrane porin (ompA) from Chlamydia muridarum (strain MoPn / Nigg).